We begin with the raw amino-acid sequence, 352 residues long: Protein NDRG4 (352 aa).

3 positions are modified to phosphoserine: serine 298, serine 317, and serine 323. Residues 301–352 (AVPSASMTRLARSRTASLTSASSVDGSRPQPCTHSDSSEGMGQVNHTMEVSC) are disordered. A compositionally biased stretch (low complexity) spans 308–323 (TRLARSRTASLTSASS). Polar residues predominate over residues 330 to 352 (QPCTHSDSSEGMGQVNHTMEVSC).

The protein belongs to the NDRG family. Expressed in the brain and heart, weakly in the kidney; most prominently in postnatal brain where it is expressed widely in the olfactory bulb, cerebral cortex, hippocampus, cerebellum, thalamus, and medulla oblongata.

The protein localises to the cytoplasm. It localises to the cytosol. Its function is as follows. Contributes to the maintenance of intracerebral BDNF levels within the normal range, which is necessary for the preservation of spatial learning and the resistance to neuronal cell death caused by ischemic stress. May enhance growth factor-induced ERK1 and ERK2 phosphorylation, including that induced by NGF. May attenuate NGF-promoted ELK1 phosphorylation in a microtubule-dependent manner. In Rattus norvegicus (Rat), this protein is Protein NDRG4 (Ndrg4).